The sequence spans 93 residues: Alpha-defensin 16 (93 aa).

An N-terminal signal peptide occupies residues 1-19 (MKTLILLSALVLLAFQVQA). Positions 20–58 (DPIQNTDEETKTEEQPGEEDQAVSVSFGDPEGTSLQEES) are excised as a propeptide. The segment at 22-54 (IQNTDEETKTEEQPGEEDQAVSVSFGDPEGTSL) is disordered. Disulfide bonds link Cys-64–Cys-92, Cys-66–Cys-81, and Cys-71–Cys-91.

It belongs to the alpha-defensin family. As to expression, paneth cells of the small bowel.

The protein resides in the secreted. In terms of biological role, probably contributes to the antimicrobial barrier function of the small bowel mucosa. This chain is Alpha-defensin 16 (Defa16), found in Mus musculus (Mouse).